The primary structure comprises 337 residues: tRNA N6-adenosine threonylcarbamoyltransferase (337 aa).

Residues His-111 and His-115 each contribute to the Fe cation site. Residues 134–138, Asp-167, Gly-180, and Asn-272 each bind substrate; that span reads LVSGG. Asp-300 serves as a coordination point for Fe cation.

It belongs to the KAE1 / TsaD family. Fe(2+) is required as a cofactor.

Its subcellular location is the cytoplasm. The catalysed reaction is L-threonylcarbamoyladenylate + adenosine(37) in tRNA = N(6)-L-threonylcarbamoyladenosine(37) in tRNA + AMP + H(+). Its function is as follows. Required for the formation of a threonylcarbamoyl group on adenosine at position 37 (t(6)A37) in tRNAs that read codons beginning with adenine. Is involved in the transfer of the threonylcarbamoyl moiety of threonylcarbamoyl-AMP (TC-AMP) to the N6 group of A37, together with TsaE and TsaB. TsaD likely plays a direct catalytic role in this reaction. The polypeptide is tRNA N6-adenosine threonylcarbamoyltransferase (Salmonella schwarzengrund (strain CVM19633)).